A 661-amino-acid chain; its full sequence is Sodium/potassium/calcium exchanger 2 (661 aa).

Residues 1–38 (MDLQQSTTITSLEKWCLDESLSGCRRHYSVKKKLKLIR) lie on the Cytoplasmic side of the membrane. A helical transmembrane segment spans residues 39–59 (VLGLFMGLVAISTVSFSISAF). Over 60–132 (SETDTQSTGE…DIFSLEERRK (73 aa)) the chain is Extracellular. Residues 99–120 (PQPPLSKEGESENSTDHAQGDY) are disordered. Residues 105–120 (KEGESENSTDHAQGDY) are compositionally biased toward basic and acidic residues. N-linked (GlcNAc...) asparagine glycosylation occurs at Asn111. The helical transmembrane segment at 133–153 (GAIILHVIGMIYMFIALAIVC) threads the bilayer. Residues 154–178 (DEFFVPSLTVITEKLGISDDVAGAT) lie on the Cytoplasmic side of the membrane. An Alpha-1 repeat occupies 174 to 214 (VAGATFMAAGGSAPELFTSLIGVFIAHSNVGIGTIVGSAVF). The chain crosses the membrane as a helical span at residues 179–199 (FMAAGGSAPELFTSLIGVFIA). At 200-204 (HSNVG) the chain is on the extracellular side. Residues 205 to 225 (IGTIVGSAVFNILFVIGMCAL) form a helical membrane-spanning segment. Over 226–243 (FSREILNLTWWPLFRDVS) the chain is Cytoplasmic. The chain crosses the membrane as a helical span at residues 244–264 (FYIVDLIMLIIFFLDNVIMWW). Glu265 is a topological domain (extracellular). Residues 266 to 286 (SLLLLTAYFCYVVFMKFNVQV) form a helical membrane-spanning segment. Topologically, residues 287 to 497 (EKWVKQMINR…PDVRKPSSRK (211 aa)) are cytoplasmic. Positions 306-336 (EAQAKPSAARDKDEPTLPAKPRLQRGGSSAS) are disordered. 2 positions are modified to phosphoserine: Ser336 and Ser340. Positions 397–439 (DENERQNGAANHVEKIELPNSTSTDVEMTPSSDASEPVQNGNL) are disordered. Polar residues predominate over residues 415-439 (PNSTSTDVEMTPSSDASEPVQNGNL). Residues 498–518 (FFPITFFGSITWIAVFSYLMV) traverse the membrane as a helical segment. Residues 519–533 (WWAHQVGETIGISEE) are Extracellular-facing. The chain crosses the membrane as a helical span at residues 534–554 (IMGLTILAAGTSIPDLITSVI). Residues 541 to 572 (AAGTSIPDLITSVIVARKGLGDMAVSSSVGSN) form an Alpha-2 repeat. Over 555–569 (VARKGLGDMAVSSSV) the chain is Cytoplasmic. The chain crosses the membrane as a helical span at residues 570–590 (GSNIFDITVGLPLPWLLYTVI). The Extracellular portion of the chain corresponds to 591–602 (HRFQPVAVSSNG). Residues 603–623 (LFCAIVLLFIMLLFVILSIAL) traverse the membrane as a helical segment. Over 624–630 (CKWRMNK) the chain is Cytoplasmic. Residues 631–651 (ILGFIMFGLYFVFLVVSVLLE) traverse the membrane as a helical segment. The Extracellular segment spans residues 652–661 (DRILTCPVSI).

It belongs to the Ca(2+):cation antiporter (CaCA) (TC 2.A.19) family. SLC24A subfamily.

Its subcellular location is the cell membrane. It catalyses the reaction Ca(2+)(out) + K(+)(out) + 4 Na(+)(in) = Ca(2+)(in) + K(+)(in) + 4 Na(+)(out). In terms of biological role, calcium, potassium:sodium antiporter that transports 1 Ca(2+) and 1 K(+) in exchange for 4 Na(+). Required for learming and memory by regulating neuronal Ca(2+), which is essential for the development of synaptic plasticity. In Homo sapiens (Human), this protein is Sodium/potassium/calcium exchanger 2 (SLC24A2).